The following is a 318-amino-acid chain: Protoheme IX farnesyltransferase (318 aa).

Helical transmembrane passes span 37 to 57 (VMEL…RGLP), 59 to 79 (IWLI…AGAF), 108 to 128 (EALV…WFGA), 131 to 151 (LAGL…TLIL), 158 to 178 (NIVW…AAVT), 183 to 203 (WPAI…YWPL), 216 to 238 (VPML…YTWA), 249 to 269 (LGHA…WFLL), and 296 to 316 (ISYL…GMPL).

It belongs to the UbiA prenyltransferase family. Protoheme IX farnesyltransferase subfamily.

It localises to the cell membrane. The catalysed reaction is heme b + (2E,6E)-farnesyl diphosphate + H2O = Fe(II)-heme o + diphosphate. It participates in porphyrin-containing compound metabolism; heme O biosynthesis; heme O from protoheme: step 1/1. Functionally, converts heme B (protoheme IX) to heme O by substitution of the vinyl group on carbon 2 of heme B porphyrin ring with a hydroxyethyl farnesyl side group. The protein is Protoheme IX farnesyltransferase of Renibacterium salmoninarum (strain ATCC 33209 / DSM 20767 / JCM 11484 / NBRC 15589 / NCIMB 2235).